The sequence spans 208 residues: Probable nicotinate-nucleotide adenylyltransferase (208 aa).

Belongs to the NadD family.

The enzyme catalyses nicotinate beta-D-ribonucleotide + ATP + H(+) = deamido-NAD(+) + diphosphate. It functions in the pathway cofactor biosynthesis; NAD(+) biosynthesis; deamido-NAD(+) from nicotinate D-ribonucleotide: step 1/1. Catalyzes the reversible adenylation of nicotinate mononucleotide (NaMN) to nicotinic acid adenine dinucleotide (NaAD). The sequence is that of Probable nicotinate-nucleotide adenylyltransferase from Acidothermus cellulolyticus (strain ATCC 43068 / DSM 8971 / 11B).